The primary structure comprises 314 residues: Mycothiol acetyltransferase (314 aa).

E39 lines the 1D-myo-inositol 2-(L-cysteinylamino)-2-deoxy-alpha-D-glucopyranoside pocket. 80 to 82 contacts acetyl-CoA; sequence LTA. The region spanning 159 to 313 is the N-acetyltransferase domain; that stretch reads FVCRRFDPIS…PTGELGHEPP (155 aa). Positions 186, 228, and 237 each coordinate 1D-myo-inositol 2-(L-cysteinylamino)-2-deoxy-alpha-D-glucopyranoside. Residues 241-243 and 248-254 contribute to the acetyl-CoA site; these read LGV and QGQGVGR. A 1D-myo-inositol 2-(L-cysteinylamino)-2-deoxy-alpha-D-glucopyranoside-binding site is contributed by Y275.

The protein belongs to the acetyltransferase family. MshD subfamily. In terms of assembly, monomer.

The catalysed reaction is 1D-myo-inositol 2-(L-cysteinylamino)-2-deoxy-alpha-D-glucopyranoside + acetyl-CoA = mycothiol + CoA + H(+). In terms of biological role, catalyzes the transfer of acetyl from acetyl-CoA to desacetylmycothiol (Cys-GlcN-Ins) to form mycothiol. The chain is Mycothiol acetyltransferase from Jonesia denitrificans (strain ATCC 14870 / DSM 20603 / BCRC 15368 / CIP 55.134 / JCM 11481 / NBRC 15587 / NCTC 10816 / Prevot 55134) (Listeria denitrificans).